The sequence spans 622 residues: Protein translocase subunit SecD (622 aa).

6 consecutive transmembrane segments (helical) span residues 6-26 (FKIG…YPTV), 460-480 (AGLR…IFYY), 485-505 (MIAD…LAAF), 512-532 (PGIA…VLIF), 559-579 (AIFD…SFGV), and 584-604 (GFAV…IVIT).

Belongs to the SecD/SecF family. SecD subfamily. In terms of assembly, forms a complex with SecF. Part of the essential Sec protein translocation apparatus which comprises SecA, SecYEG and auxiliary proteins SecDF. Other proteins may also be involved.

The protein resides in the cell inner membrane. Part of the Sec protein translocase complex. Interacts with the SecYEG preprotein conducting channel. SecDF uses the proton motive force (PMF) to complete protein translocation after the ATP-dependent function of SecA. This chain is Protein translocase subunit SecD, found in Rhodothermus marinus (strain ATCC 43812 / DSM 4252 / R-10) (Rhodothermus obamensis).